The chain runs to 73 residues: Defensin-like protein 34 (73 aa).

The N-terminal stretch at 1-25 (MASNKVSFFLVLCLCVLSTAEFGEA) is a signal peptide. Cystine bridges form between Cys33–Cys59, Cys45–Cys68, and Cys49–Cys70.

This sequence belongs to the DEFL family.

It localises to the secreted. In Arabidopsis thaliana (Mouse-ear cress), this protein is Defensin-like protein 34.